We begin with the raw amino-acid sequence, 620 residues long: Chaperone protein HscA homolog (620 aa).

Belongs to the heat shock protein 70 family.

Chaperone involved in the maturation of iron-sulfur cluster-containing proteins. Has a low intrinsic ATPase activity which is markedly stimulated by HscB. This Pasteurella multocida (strain Pm70) protein is Chaperone protein HscA homolog.